The following is a 256-amino-acid chain: 5-keto-4-deoxy-D-glucarate aldolase (256 aa).

The Proton acceptor role is filled by His50. Gln151 is a substrate binding site. Residue Glu153 coordinates Mg(2+). Substrate contacts are provided by Ser178 and Asp179. Asp179 is a binding site for Mg(2+).

It belongs to the HpcH/HpaI aldolase family. KDGluc aldolase subfamily. In terms of assembly, homohexamer; trimer of dimers. It depends on Mg(2+) as a cofactor.

The enzyme catalyses 5-dehydro-4-deoxy-D-glucarate = 2-hydroxy-3-oxopropanoate + pyruvate. It catalyses the reaction 2-dehydro-3-deoxy-D-glucarate = 2-hydroxy-3-oxopropanoate + pyruvate. Its pathway is carbohydrate acid metabolism; galactarate degradation; D-glycerate from galactarate: step 2/3. Functionally, catalyzes the reversible retro-aldol cleavage of both 5-keto-4-deoxy-D-glucarate and 2-keto-3-deoxy-D-glucarate to pyruvate and tartronic semialdehyde. The protein is 5-keto-4-deoxy-D-glucarate aldolase of Shigella dysenteriae serotype 1 (strain Sd197).